Consider the following 500-residue polypeptide: Maturase K (500 aa).

Belongs to the intron maturase 2 family. MatK subfamily.

It is found in the plastid. The protein localises to the chloroplast. Its function is as follows. Usually encoded in the trnK tRNA gene intron. Probably assists in splicing its own and other chloroplast group II introns. This chain is Maturase K, found in Fragaria vesca (Woodland strawberry).